The following is a 302-amino-acid chain: uncharacterized protein (302 aa).

The N-terminal stretch at 1-52 (MLKKLKVVRLLVNHLIYCPSIFMPYSKNMKKKIWNKTSLGALFMLFGTALTA) is a signal peptide.

Belongs to the MG439/MG440 family.

This is an uncharacterized protein from Mycoplasma pneumoniae (strain ATCC 29342 / M129 / Subtype 1) (Mycoplasmoides pneumoniae).